The sequence spans 667 residues: Protein OS-9 (667 aa).

An N-terminal signal peptide occupies residues 1-25; sequence MAAETLLSSLLGLLLLGLLLPATLT. The MRH domain maps to 108–230; it reads APCLLKTKDW…TIRTPRLCPH (123 aa). A disulfide bond links C110 and C123. A mannooligosaccharide derivative-binding residues include W117, W118, and Q130. N-linked (GlcNAc...) asparagine glycosylation occurs at N177. Disulfide bonds link C181/C216 and C196/C228. Residues D182, R188, E212, and Y218 each coordinate a mannooligosaccharide derivative. 3 disordered regions span residues 262–450, 506–541, and 636–667; these read QADS…SDRE, EKQS…EHRV, and ERQR…EFDF. Composition is skewed to basic and acidic residues over residues 263 to 279, 304 to 328, and 396 to 408; these read ADSK…RQDP, ENSK…KEET, and PSRE…KGDP. The segment covering 410–429 has biased composition (acidic residues); the sequence is QQNEVEEEEDDEDEDEDEDE. Positions 430–450 are enriched in basic and acidic residues; it reads RQLLGEFEKELEGILLPSDRE. Positions 514 to 523 are enriched in basic residues; it reads KKHRKRRVVP. The segment covering 636 to 647 has biased composition (basic and acidic residues); that stretch reads ERQRQKELESNY.

Belongs to the OS-9 family. As to quaternary structure, component of the HRD1 complex, which comprises at least SYNV1/HRD1, DERL1/2, FAM8A1, HERPUD1/HERP, OS9, SEL1L and UBE2J1. FAM8A1 is stabilized by interaction with SYNV1, which prevents its proteasomal degradation. OS9 and UBE2J1 recruitment to the complex may be mediated by SEL1L. Through this complex, may interact with ERLEC1 and HSPA5. Interacts (via C-terminus) with CPNE6 (via second C2 domain); this interaction occurs in a calcium-dependent manner in vitro. Interacts with CREB3. In terms of processing, intramolecular disulfide bonds.

The protein resides in the endoplasmic reticulum lumen. Its function is as follows. Lectin component of the HRD1 complex, which functions in endoplasmic reticulum (ER) quality control and ER-associated degradation (ERAD). Specifically recognizes and binds improperly folded glycoproteins as well as hyperglycosylated proteins, retain them in the ER, and transfers them to the ubiquitination machinery and promote their degradation. Possible targets include TRPV4 as well as hyperglycosylated HSP90B1. The sequence is that of Protein OS-9 (OS9) from Bos taurus (Bovine).